The chain runs to 199 residues: Recombination protein RecR (199 aa).

The segment at 58–73 (CSRCFYFTEEDPCPLC) adopts a C4-type zinc-finger fold. Positions 81–176 (QLICVVEEPQ…KVTRLAHGIP (96 aa)) constitute a Toprim domain.

Belongs to the RecR family.

In terms of biological role, may play a role in DNA repair. It seems to be involved in an RecBC-independent recombinational process of DNA repair. It may act with RecF and RecO. The sequence is that of Recombination protein RecR from Syntrophotalea carbinolica (strain DSM 2380 / NBRC 103641 / GraBd1) (Pelobacter carbinolicus).